We begin with the raw amino-acid sequence, 185 residues long: ATP synthase subunit b 2 (185 aa).

The segment at 1 to 23 (MAEGHGDAKGATAHTAADGGHKA) is disordered. The span at 9–18 (KGATAHTAAD) shows a compositional bias: low complexity. Residues 32-51 (TFASQLVSLTIAFVALYLIV) form a helical membrane-spanning segment.

This sequence belongs to the ATPase B chain family. F-type ATPases have 2 components, F(1) - the catalytic core - and F(0) - the membrane proton channel. F(1) has five subunits: alpha(3), beta(3), gamma(1), delta(1), epsilon(1). F(0) has three main subunits: a(1), b(2) and c(10-14). The alpha and beta chains form an alternating ring which encloses part of the gamma chain. F(1) is attached to F(0) by a central stalk formed by the gamma and epsilon chains, while a peripheral stalk is formed by the delta and b chains.

The protein resides in the cell inner membrane. Its function is as follows. F(1)F(0) ATP synthase produces ATP from ADP in the presence of a proton or sodium gradient. F-type ATPases consist of two structural domains, F(1) containing the extramembraneous catalytic core and F(0) containing the membrane proton channel, linked together by a central stalk and a peripheral stalk. During catalysis, ATP synthesis in the catalytic domain of F(1) is coupled via a rotary mechanism of the central stalk subunits to proton translocation. In terms of biological role, component of the F(0) channel, it forms part of the peripheral stalk, linking F(1) to F(0). The b'-subunit is a diverged and duplicated form of b found in plants and photosynthetic bacteria. This Rhodopseudomonas palustris (strain HaA2) protein is ATP synthase subunit b 2 (atpF2).